The chain runs to 426 residues: Target of rapamycin complex 2 subunit AVO2 (426 aa).

ANK repeat units follow at residues 4-33 (EPSV…DLLT), 39-68 (NGWS…DKHE), 74-104 (KGNT…FINH), 108-137 (NGRA…DLWV), and 141-171 (NGDT…SLDD). The segment at 259 to 302 (STHTTSGNGGNRRSSITNPVFNPRKPTLSTDSFSSSSNSSSRLR) is disordered. Residues 260-278 (THTTSGNGGNRRSSITNPV) are compositionally biased toward polar residues. Positions 285–302 (TLSTDSFSSSSNSSSRLR) are enriched in low complexity. Phosphoserine is present on residues Ser-315 and Ser-350. Over residues 350-359 (SNDNVRGDSQ) the composition is skewed to polar residues. The tract at residues 350–392 (SNDNVRGDSQTATINDDGGGGNGGDATIGMGLRKDPDDENENK) is disordered. The segment covering 366–375 (DGGGGNGGDA) has biased composition (gly residues). A compositionally biased stretch (basic and acidic residues) spans 381–392 (LRKDPDDENENK).

The target of rapamycin complex 2 (TORC2) is composed of at least AVO1, AVO2, BIT61, LST8, TOR2 and TSC11. TORC2 forms a homodimer. Contrary to TORC1, TORC2 does not bind to and is not sensitive to FKBP-rapamycin. AVO2 is peripherally associated to AVO1 and TSC11.

Its subcellular location is the cell membrane. It is found in the vacuole membrane. In terms of biological role, component of TORC2, which regulates cell cycle-dependent polarization of the actin-cytoskeleton and cell wall integrity. TORC2 controls polarity of the actin cytoskeleton, which is required for orienting the secretory pathway toward discrete growth sites, via the RHO1/PKC1/MAPK cell integrity pathway. The polypeptide is Target of rapamycin complex 2 subunit AVO2 (AVO2) (Saccharomyces cerevisiae (strain ATCC 204508 / S288c) (Baker's yeast)).